The following is a 641-amino-acid chain: 1-deoxy-D-xylulose-5-phosphate synthase (641 aa).

Thiamine diphosphate-binding positions include H79 and 120 to 122 (AHS). D151 is a binding site for Mg(2+). Residues 152-153 (GS), N180, Y290, and E372 each bind thiamine diphosphate. Mg(2+) is bound at residue N180.

Belongs to the transketolase family. DXPS subfamily. Homodimer. Requires Mg(2+) as cofactor. It depends on thiamine diphosphate as a cofactor.

The catalysed reaction is D-glyceraldehyde 3-phosphate + pyruvate + H(+) = 1-deoxy-D-xylulose 5-phosphate + CO2. The protein operates within metabolic intermediate biosynthesis; 1-deoxy-D-xylulose 5-phosphate biosynthesis; 1-deoxy-D-xylulose 5-phosphate from D-glyceraldehyde 3-phosphate and pyruvate: step 1/1. Functionally, catalyzes the acyloin condensation reaction between C atoms 2 and 3 of pyruvate and glyceraldehyde 3-phosphate to yield 1-deoxy-D-xylulose-5-phosphate (DXP). This is 1-deoxy-D-xylulose-5-phosphate synthase from Rhodopseudomonas palustris (strain BisB18).